Consider the following 42-residue polypeptide: Ostricacin-4 (42 aa).

3 disulfide bridges follow: C8–C36, C15–C30, and C20–C37.

It localises to the secreted. Its function is as follows. Has antibacterial activity against the Gram-positive bacterium S.aureus 1056 MRSA (MIC=11.48 ug/ml) and the Gram-negative bacterium E.coli O157:H7 (MIC=12.03 ug/ml). Does not have antifungal activity against the yeast C.albicans 3153A. This Struthio camelus (Common ostrich) protein is Ostricacin-4.